A 308-amino-acid chain; its full sequence is Mycothiol acetyltransferase (308 aa).

1D-myo-inositol 2-(L-cysteinylamino)-2-deoxy-alpha-D-glucopyranoside is bound at residue glutamate 44. An acetyl-CoA-binding site is contributed by 83 to 85 (AVV). In terms of domain architecture, N-acetyltransferase spans 161–308 (VRLRTYAGSA…DVAYGRPEGD (148 aa)). Residues glutamate 188, lysine 230, and glutamate 238 each coordinate 1D-myo-inositol 2-(L-cysteinylamino)-2-deoxy-alpha-D-glucopyranoside. Acetyl-CoA contacts are provided by residues 242 to 244 (VGV) and 249 to 255 (QGRGLGR). Tyrosine 276 is a binding site for 1D-myo-inositol 2-(L-cysteinylamino)-2-deoxy-alpha-D-glucopyranoside. 281-286 (NTAALH) provides a ligand contact to acetyl-CoA.

This sequence belongs to the acetyltransferase family. MshD subfamily. In terms of assembly, monomer.

The catalysed reaction is 1D-myo-inositol 2-(L-cysteinylamino)-2-deoxy-alpha-D-glucopyranoside + acetyl-CoA = mycothiol + CoA + H(+). In terms of biological role, catalyzes the transfer of acetyl from acetyl-CoA to desacetylmycothiol (Cys-GlcN-Ins) to form mycothiol. This chain is Mycothiol acetyltransferase, found in Gordonia bronchialis (strain ATCC 25592 / DSM 43247 / BCRC 13721 / JCM 3198 / KCTC 3076 / NBRC 16047 / NCTC 10667) (Rhodococcus bronchialis).